The following is a 303-amino-acid chain: Glutathione transport system permease protein GsiD (303 aa).

7 helical membrane-spanning segments follow: residues 37–57 (QHVALVAGGFVLALILVAIFA), 105–125 (LAAGVFAVFIGAIIGTVLGLL), 144–164 (LFAFPGILLAIAVVAVLGSGI), 165–185 (ANVIVAVAIFSIPAFARLVRG), 208–228 (TILFSHILPGTVSSIVVFFTM), 230–250 (IGTSIISAASLSFLGLGAQPP), and 266–286 (VIAPHVALFPAVAIFLTVLAF). Positions 101-290 (AQISLAAGVF…LTVLAFNLLG (190 aa)) constitute an ABC transmembrane type-1 domain.

It belongs to the binding-protein-dependent transport system permease family. The complex is composed of two ATP-binding proteins (GsiA), two transmembrane proteins (GsiC and GsiD) and a solute-binding protein (GsiB).

The protein resides in the cell inner membrane. Functionally, part of the ABC transporter complex GsiABCD involved in glutathione import. Probably responsible for the translocation of the substrate across the membrane. The chain is Glutathione transport system permease protein GsiD from Salmonella paratyphi A (strain ATCC 9150 / SARB42).